The sequence spans 226 residues: Ribonuclease 3 (226 aa).

An RNase III domain is found at 6-128 (INRLQRKLGY…LIGGVFLDSN (123 aa)). Glu41 provides a ligand contact to Mg(2+). Residue Asp45 is part of the active site. Positions 114 and 117 each coordinate Mg(2+). Glu117 is an active-site residue. Residues 155-225 (DPKTRLQEYL…AEQALKKLEL (71 aa)) form the DRBM domain.

The protein belongs to the ribonuclease III family. Homodimer. It depends on Mg(2+) as a cofactor.

The protein localises to the cytoplasm. The catalysed reaction is Endonucleolytic cleavage to 5'-phosphomonoester.. Its function is as follows. Digests double-stranded RNA. Involved in the processing of primary rRNA transcript to yield the immediate precursors to the large and small rRNAs (23S and 16S). Processes some mRNAs, and tRNAs when they are encoded in the rRNA operon. Processes pre-crRNA and tracrRNA of type II CRISPR loci if present in the organism. The protein is Ribonuclease 3 of Salmonella typhi.